Consider the following 786-residue polypeptide: m7GpppN-mRNA hydrolase dcap-2 (786 aa).

Polar residues predominate over residues 25 to 61 (QKQNKSTEEPPSSVQKLLASLQQAQNKSDLSEQPSTS). Positions 25 to 148 (QKQNKSTEEP…QQQQQYKGPR (124 aa)) are disordered. A compositionally biased stretch (basic residues) spans 62 to 72 (KPKKNEKRKKA). 2 stretches are compositionally biased toward polar residues: residues 101–111 (MQQQAENARIS) and 118–133 (QVST…TAPE). A compositionally biased stretch (low complexity) spans 134 to 144 (QQNYQQQQQQY). The 129-residue stretch at 238–366 (STVPTYGAIL…LPAYLQGNKF (129 aa)) folds into the Nudix hydrolase domain. The short motif at 273–294 (GKINQAEPPRDAAIRETFEETG) is the Nudix box element. Mg(2+) contacts are provided by glutamate 288 and glutamate 292. 2 disordered regions span residues 556 to 576 (IMHS…TPTA) and 623 to 655 (ISST…SSQV). 2 stretches are compositionally biased toward polar residues: residues 623-632 (ISSTQKQSIP) and 646-655 (SASLSGSSQV).

The protein belongs to the Nudix hydrolase family. DCP2 subfamily. As to quaternary structure, may be a component of the decapping complex composed of dcap-1 and dcap-2. Mg(2+) serves as cofactor. The cofactor is Mn(2+). As to expression, expressed in sensory neurons.

The protein resides in the cytoplasmic granule. Its subcellular location is the cytoplasm. It is found in the perinuclear region. The enzyme catalyses a 5'-end (N(7)-methyl 5'-triphosphoguanosine)-ribonucleoside in mRNA + H2O = N(7)-methyl-GDP + a 5'-end phospho-ribonucleoside in mRNA + 2 H(+). It carries out the reaction a 5'-end (N(2),N(2),N(7)-trimethyl 5'-triphosphoguanosine)-ribonucleoside in mRNA + H2O = N(2),N(2),N(7)-trimethyl-GDP + a 5'-end phospho-ribonucleoside in mRNA + 2 H(+). With respect to regulation, inhibited by capped and uncapped RNA. Not inhibited by dinucleotide cap or methylated nucleotide analogs. Its function is as follows. Decapping metalloenzyme that catalyzes the cleavage of the cap structure on mRNAs. Removes the 7-methyl guanine cap structure from mRNA molecules, yielding a 5'-phosphorylated mRNA fragment and 7m-GDP. RNA-decapping enzyme although it does not bind the RNA cap. May contribute to gene regulation in multiple RNA pathways including monomethylguanosine- and trimethylguanosine-capped RNAs. In oocytes, may play a role in the response to stress induced by heat shock, osmotic stress and anoxia. Required for the developmental axon guidance and regrowth of PLM touch receptor neurons. Early in embryogenesis, plays a role in ciliary shape formation in sensory neurons. Promotes survival at high temperatures. The sequence is that of m7GpppN-mRNA hydrolase dcap-2 from Caenorhabditis elegans.